A 372-amino-acid chain; its full sequence is N-methyl-L-tryptophan oxidase (372 aa).

4-34 (DLIIIGSGSVGAAAGYYATRAGLNVLMTDAH) is a binding site for FAD. C308 carries the S-8alpha-FAD cysteine modification.

This sequence belongs to the MSOX/MTOX family. MTOX subfamily. In terms of assembly, monomer. It depends on FAD as a cofactor.

It catalyses the reaction N(alpha)-methyl-L-tryptophan + O2 + H2O = L-tryptophan + formaldehyde + H2O2. Its function is as follows. Catalyzes the oxidative demethylation of N-methyl-L-tryptophan. The protein is N-methyl-L-tryptophan oxidase of Escherichia coli O7:K1 (strain IAI39 / ExPEC).